The sequence spans 302 residues: Uricase (302 aa).

Catalysis depends on charge relay system residues Lys-22 and Thr-67. Urate-binding residues include Thr-67, Asp-68, Phe-163, Arg-180, Gln-223, and Asn-249. Residue His-251 is the Charge relay system of the active site.

The protein belongs to the uricase family. In terms of assembly, homotetramer.

The enzyme catalyses urate + O2 + H2O = 5-hydroxyisourate + H2O2. The protein operates within purine metabolism; urate degradation; (S)-allantoin from urate: step 1/3. In terms of biological role, catalyzes the oxidation of uric acid to 5-hydroxyisourate, which is further processed to form (S)-allantoin. The protein is Uricase (uox) of Arthrobacter globiformis.